Here is a 176-residue protein sequence, read N- to C-terminus: Protein MAL2 (176 aa).

Residues 1–34 (MSAGGASVPPPPNPAVSFPVPRVTLPAGPDILRT) lie on the Cytoplasmic side of the membrane. In terms of domain architecture, MARVEL spans 31 to 175 (ILRTYSGAFV…SLGLALRRWR (145 aa)). Residues 35 to 55 (YSGAFVCLEILFGGLVWILVA) traverse the membrane as a helical segment. The Lumenal portion of the chain corresponds to 56–66 (SSNVPLPLLQG). A helical transmembrane segment spans residues 67–87 (WVMFVSVTAFFFSLLFLGLFL). At 88–102 (SGMVTQIDANWNFLD) the chain is on the cytoplasmic side. The helical transmembrane segment at 103–123 (FAYHFTVFVFYFGAFLLEAAA) threads the bilayer. Residues 124-149 (TSLHDLHYNITMTGQPLLNDNQYNIN) are Lumenal-facing. N-linked (GlcNAc...) asparagine glycosylation is present at Asn-132. The helical transmembrane segment at 150-170 (VAASIFAFMTTACYGCSLGLA) threads the bilayer. The Cytoplasmic portion of the chain corresponds to 171–176 (LRRWRP).

The protein belongs to the MAL family. As to quaternary structure, interacts with TPD52L2.

The protein localises to the cell membrane. It localises to the apical cell membrane. Functionally, member of the machinery of polarized transport. Required for the indirect transcytotic route at the step of the egress of the transcytosing cargo from perinuclear endosomes in order for it to travel to the apical surface via a raft-dependent pathway. The sequence is that of Protein MAL2 (MAL2) from Pongo abelii (Sumatran orangutan).